Reading from the N-terminus, the 91-residue chain is Sec-independent protein translocase protein TatA (91 aa).

The chain crosses the membrane as a helical span at residues 1 to 21; it reads MGIFDWKHWIVILIVVVLVFG. The disordered stretch occupies residues 41–91; that stretch reads KAMNDDDKPAEQPAPQPQQAQPAPQGSPLNQPHTIDAQAHKVDEPIRKDQV. Residues 51-64 are compositionally biased toward low complexity; it reads EQPAPQPQQAQPAP. The span at 78 to 91 shows a compositional bias: basic and acidic residues; that stretch reads QAHKVDEPIRKDQV.

The protein belongs to the TatA/E family. The Tat system comprises two distinct complexes: a TatABC complex, containing multiple copies of TatA, TatB and TatC subunits, and a separate TatA complex, containing only TatA subunits. Substrates initially bind to the TatABC complex, which probably triggers association of the separate TatA complex to form the active translocon.

The protein resides in the cell inner membrane. In terms of biological role, part of the twin-arginine translocation (Tat) system that transports large folded proteins containing a characteristic twin-arginine motif in their signal peptide across membranes. TatA could form the protein-conducting channel of the Tat system. The protein is Sec-independent protein translocase protein TatA of Pseudomonas syringae pv. syringae (strain B728a).